The primary structure comprises 433 residues: C2H2 type master regulator of conidiophore development brlA (433 aa).

3 disordered regions span residues 24–49, 240–269, and 286–306; these read SDCP…LYSQ, KSHT…ISGH, and MMQR…LRSN. Positions 30 to 49 are enriched in low complexity; it reads TSSFSPLDSPTPTPTSLYSQ. Residues 240 to 264 are compositionally biased toward polar residues; the sequence is KSHTPSTPHRSVSMGTPSGSDTPVS. Residues 288 to 302 are compositionally biased toward basic residues; the sequence is QRHRQPSRKPSKKQL. 2 C2H2-type zinc fingers span residues 321 to 345 and 351 to 376; these read FKCK…MKSH and HVCW…TKTH. The segment at 391–423 is disordered; the sequence is ETSQDFDPDFRGQLTPDGRPIYGSKLEDSMPDC.

The protein resides in the nucleus. Its function is as follows. BrlA, abaA and wetA are pivotal regulators of conidiophore development and conidium maturation. They act individually and together to regulate their own expression and that of numerous other sporulation-specific genes. Binds promoters of target genes at brlA response elements (BREs) containing the conserved sequence 5'-(C/A)(A/G)AGGG(G/A)-3'. Regulates genes involved in conidiogenesis. The protein is C2H2 type master regulator of conidiophore development brlA of Penicillium digitatum (strain PHI26 / CECT 20796) (Green mold).